Here is a 449-residue protein sequence, read N- to C-terminus: Tubulin beta-8 chain (449 aa).

The GTP site is built by Gln-11, Glu-69, Ser-138, Gly-142, Thr-143, Gly-144, Asn-204, and Asn-226. Residue Glu-69 coordinates Mg(2+). Residues Ala-428 to Gln-449 are disordered. The span at Thr-429–Gln-449 shows a compositional bias: acidic residues.

Belongs to the tubulin family. In terms of assembly, dimer of alpha and beta chains. A typical microtubule is a hollow water-filled tube with an outer diameter of 25 nm and an inner diameter of 15 nM. Alpha-beta heterodimers associate head-to-tail to form protofilaments running lengthwise along the microtubule wall with the beta-tubulin subunit facing the microtubule plus end conferring a structural polarity. Microtubules usually have 13 protofilaments but different protofilament numbers can be found in some organisms and specialized cells. It depends on Mg(2+) as a cofactor.

Its subcellular location is the cytoplasm. It localises to the cytoskeleton. In terms of biological role, tubulin is the major constituent of microtubules, a cylinder consisting of laterally associated linear protofilaments composed of alpha- and beta-tubulin heterodimers. Microtubules grow by the addition of GTP-tubulin dimers to the microtubule end, where a stabilizing cap forms. Below the cap, tubulin dimers are in GDP-bound state, owing to GTPase activity of alpha-tubulin. The sequence is that of Tubulin beta-8 chain (TUBB8) from Arabidopsis thaliana (Mouse-ear cress).